A 627-amino-acid polypeptide reads, in one-letter code: Glucokinase regulatory protein (627 aa).

SIS domains are found at residues 90 to 286 and 320 to 499; these read VQEV…QGVV and VGIS…LLGK. Residues 109 to 110, Glu153, and 179 to 181 each bind beta-D-fructose 1-phosphate; these read TS and SVG. 109–110 contacts beta-D-fructose 6-phosphate; sequence TS. 179 to 181 contacts beta-D-fructose 6-phosphate; that stretch reads SVG. The interval 199–200 is important for interaction with GCK; the sequence is AV. Glu348 contributes to the beta-D-fructose 1-phosphate binding site. The segment at 463–465 is essential for interaction with GCK; that stretch reads LLF. Lys514 is a beta-D-fructose 1-phosphate binding site. Lys514 is a binding site for beta-D-fructose 6-phosphate.

Belongs to the GCKR family. In terms of assembly, interacts (fructose 6-phosphate bound form) with GCK. In terms of tissue distribution, detected in liver (at protein level). Not detected in muscle, brain, heart, testis, intestine or spleen.

It is found in the cytoplasm. The protein localises to the nucleus. The protein resides in the mitochondrion. Functionally, regulates glucokinase (GCK) by forming an inactive complex with this enzyme. Acts by promoting GCK recruitment to the nucleus, possibly to provide a reserve of GCK that can be quickly released in the cytoplasm after a meal. The affinity of GCKR for GCK is modulated by fructose metabolites: GCKR with bound fructose 6-phosphate has increased affinity for GCK, while GCKR with bound fructose 1-phosphate has strongly decreased affinity for GCK and does not inhibit GCK activity. The protein is Glucokinase regulatory protein of Rattus norvegicus (Rat).